Here is a 305-residue protein sequence, read N- to C-terminus: Glycine--tRNA ligase alpha subunit (305 aa).

It belongs to the class-II aminoacyl-tRNA synthetase family. As to quaternary structure, tetramer of two alpha and two beta subunits.

It is found in the cytoplasm. It carries out the reaction tRNA(Gly) + glycine + ATP = glycyl-tRNA(Gly) + AMP + diphosphate. The chain is Glycine--tRNA ligase alpha subunit from Streptococcus mutans serotype c (strain ATCC 700610 / UA159).